We begin with the raw amino-acid sequence, 127 residues long: Fluoride-specific ion channel FluC (127 aa).

Transmembrane regions (helical) follow at residues 4-24 (LLLV…VGVG), 36-56 (GTFT…SWLA), 72-92 (VGVL…ALMI), and 101-121 (FTYS…GLLV). The Na(+) site is built by Gly-76 and Thr-79.

This sequence belongs to the fluoride channel Fluc/FEX (TC 1.A.43) family.

Its subcellular location is the cell inner membrane. It catalyses the reaction fluoride(in) = fluoride(out). Its activity is regulated as follows. Na(+) is not transported, but it plays an essential structural role and its presence is essential for fluoride channel function. In terms of biological role, fluoride-specific ion channel. Important for reducing fluoride concentration in the cell, thus reducing its toxicity. In Caulobacter vibrioides (strain ATCC 19089 / CIP 103742 / CB 15) (Caulobacter crescentus), this protein is Fluoride-specific ion channel FluC.